The primary structure comprises 511 residues: Exodeoxyribonuclease 7 large subunit (511 aa).

The protein belongs to the XseA family. Heterooligomer composed of large and small subunits.

Its subcellular location is the cytoplasm. It catalyses the reaction Exonucleolytic cleavage in either 5'- to 3'- or 3'- to 5'-direction to yield nucleoside 5'-phosphates.. Its function is as follows. Bidirectionally degrades single-stranded DNA into large acid-insoluble oligonucleotides, which are then degraded further into small acid-soluble oligonucleotides. The chain is Exodeoxyribonuclease 7 large subunit from Brucella suis (strain ATCC 23445 / NCTC 10510).